Reading from the N-terminus, the 81-residue chain is Putative defensin-like protein 56 (81 aa).

Residues 1–23 form the signal peptide; that stretch reads MNITKAYVIFFLVVILTNSLSNS. 4 disulfide bridges follow: cysteine 46–cysteine 80, cysteine 50–cysteine 73, cysteine 59–cysteine 78, and cysteine 63–cysteine 79.

Belongs to the DEFL family.

It localises to the secreted. The polypeptide is Putative defensin-like protein 56 (Arabidopsis thaliana (Mouse-ear cress)).